The sequence spans 1713 residues: Cell wall protein AWA1 (1713 aa).

A signal peptide spans 1–23; it reads MFNRFNKLQAALALVLYSQSALG. A glycan (N-linked (GlcNAc...) asparagine) is linked at N34. Disordered regions lie at residues 80–117, 256–327, and 359–939; these read IAPS…SSSS, TSTT…AESI, and SSGI…STAS. Residues 256 to 275 show a composition bias toward low complexity; it reads TSTTSDTYISSSSPSQVTSS. Composition is skewed to polar residues over residues 276–327 and 359–368; these read AEPT…AESI and SSGISSSVEP. Low complexity predominate over residues 374 to 939; the sequence is PSSDESISST…QSTSSASTAS (566 aa). 3 N-linked (GlcNAc...) asparagine glycosylation sites follow: N1133, N1241, and N1278. Residues 1582 to 1603 form a disordered region; sequence KTVTSEAPKETSETSETSAAPK. A1692 carries the GPI-anchor amidated alanine lipid modification. A propeptide spans 1693-1713 (removed in mature form); the sequence is AGLNANTLNALVGIFVLAFFN.

It belongs to the SRP1/TIP1 family. In terms of processing, the GPI-anchor is attached to the protein in the endoplasmic reticulum and serves to target the protein to the cell surface. There, the glucosamine-inositol phospholipid moiety is cleaved off and the GPI-modified mannoprotein is covalently attached via its lipidless GPI glycan remnant to the 1,6-beta-glucan of the outer cell wall layer.

The protein localises to the secreted. It is found in the cell wall. The protein resides in the membrane. Involved in cell wall organization and biosynthesis. Confers cell surface hydrophobicity (CSH). The protein is Cell wall protein AWA1 (AWA1) of Saccharomyces cerevisiae (strain Kyokai no. 7 / NBRC 101557) (Baker's yeast).